A 361-amino-acid polypeptide reads, in one-letter code: Peptidyl-prolyl cis-trans isomerase CYP40 (361 aa).

The 166-residue stretch at 7 to 172 (FMDISIGGEL…QDVVIHDCGE (166 aa)) folds into the PPIase cyclophilin-type domain. TPR repeat units follow at residues 212-245 (VDFVKAHGNEHFKKQDYKMALRKYRKALRYLDIC) and 298-331 (VKALFRQGQAYMALNNVDAAAESLEKALQFEPND).

Belongs to the cyclophilin-type PPIase family. Expressed at low levels in seedlings, roots, shoots, leaves, stems, inflorescences, flowers and siliques, with highest levels dividing tissues.

The protein resides in the cytoplasm. It catalyses the reaction [protein]-peptidylproline (omega=180) = [protein]-peptidylproline (omega=0). Its activity is regulated as follows. Binds cyclosporin A (CsA). CsA mediates some of its effects via an inhibitory action on PPIase. In terms of biological role, PPIases accelerate the folding of proteins. It catalyzes the cis-trans isomerization of proline imidic peptide bonds in oligopeptides. Involved in promoting the expression of the juvenile phase of vegetative development, and, to a lower extent, in regulating the positioning of floral buds, floral morphogenesis and the expression of HSPs. Collaboratively with RBL and ULT1, influences floral meristem (FM) determinacy in an AGAMOUS and SUPERMAN-dependent manner, thus contributing to the floral developmental homeostasis. This chain is Peptidyl-prolyl cis-trans isomerase CYP40, found in Arabidopsis thaliana (Mouse-ear cress).